We begin with the raw amino-acid sequence, 359 residues long: MEMAGCGEIDHSINMLPTNKKANESCSNTAPSLTVPECAICLQTCVHPVSLPCKHVFCYLCVKGASWLGKRCALCRQEIPEDFLDKPTLLSPEELKAASRGNGEYAWYYEGRNGWWQYDERTSRELEDAFSKGKKNTEMLIAGFLYVADLENMVQYRRNEHGRRRKIKRDIIDIPKKGVAGLRLDCDTNTVNLARESSADGADSGSAQTGASVQLAVPSSTRPLTSVDGQLTSPVTPSPDAGISLEDSFAHLQLSGDSIAERSHRGEGEEDHESPSSGRVPDTSVEETESDASSDSEDAPVVVAQHSLTQQRPLVPNGNQTVADQSDRSGTDRSVAGGGTMSVNVRSRRPDGQCTVTEV.

The segment at 38–76 (CAICLQTCVHPVSLPCKHVFCYLCVKGASWLGKRCALCR) adopts an RING-type zinc-finger fold. Residues lysine 86 and lysine 96 each participate in a glycyl lysine isopeptide (Lys-Gly) (interchain with G-Cter in ubiquitin) cross-link. In terms of domain architecture, WWE spans 93–169 (EELKAASRGN…EHGRRRKIKR (77 aa)). Tyrosine 109, arginine 112, and tryptophan 116 together coordinate a glycoprotein. Lysine 132 participates in a covalent cross-link: Glycyl lysine isopeptide (Lys-Gly) (interchain with G-Cter in ubiquitin). Tyrosine 146, glutamine 155, arginine 165, and lysine 177 together coordinate a glycoprotein. Lysine 177 participates in a covalent cross-link: Glycyl lysine isopeptide (Lys-Gly) (interchain with G-Cter in ubiquitin). 2 disordered regions span residues 197-243 (SSAD…DAGI) and 261-359 (ERSH…VTEV). Over residues 199-212 (ADGADSGSAQTGAS) the composition is skewed to low complexity. Over residues 217–235 (VPSSTRPLTSVDGQLTSPV) the composition is skewed to polar residues. Residues 284–298 (SVEETESDASSDSED) are compositionally biased toward acidic residues. Phosphoserine is present on residues serine 290 and serine 294. A compositionally biased stretch (polar residues) spans 306-324 (HSLTQQRPLVPNGNQTVAD).

In terms of assembly, can form homooligomers. Interacts with PARsylated AXIN1, AXIN2, BLZF1, CASC3, H1-2, IPO7, LIG3, NCL, PARP1, XRCC1, XRCC5 and XRCC6. Interacts with DDB1, DHX15, IQGAP1, LRPPRC, PARP2, PRKDC, RUVBL2, TNKS1 and TNKS2. Binding often leads to interactor ubiquitination, in the presence of the appropriate E1 and E2 enzymes, and proteasomal degradation. Post-translationally, ubiquitinated; autoubiquitinated. Autoubiquitination is enhanced upon PAR-binding. Expressed at relatively high levels in the brain. Also present in spleen, heart, kidney, testis and liver. In the brain, expressed in the cerebellum, hippocampus, striatum, cortex, frontal cortex and, at lowest levels, in olfactory bulb (at protein level). Predominantly expressed in neurons.

It localises to the cytoplasm. The protein localises to the cytosol. Its subcellular location is the nucleus. It catalyses the reaction S-ubiquitinyl-[E2 ubiquitin-conjugating enzyme]-L-cysteine + [acceptor protein]-L-lysine = [E2 ubiquitin-conjugating enzyme]-L-cysteine + N(6)-ubiquitinyl-[acceptor protein]-L-lysine.. It functions in the pathway protein modification; protein ubiquitination. In terms of biological role, E3 ubiquitin-protein ligase that specifically binds poly-ADP-ribosylated (PARsylated) proteins and mediates their ubiquitination and subsequent degradation. May regulate many important biological processes, such as cell survival and DNA damage response. Acts as an activator of the Wnt signaling pathway by mediating the ubiquitination of PARsylated AXIN1 and AXIN2, 2 key components of the beta-catenin destruction complex. Acts in cooperation with tankyrase proteins (TNKS and TNKS2), which mediate PARsylation of target proteins AXIN1, AXIN2, BLZF1, CASC3, TNKS and TNKS2. Recognizes and binds tankyrase-dependent PARsylated proteins via its WWE domain and mediates their ubiquitination, leading to their degradation. Different ubiquitin linkage types have been observed: TNKS2 undergoes ubiquitination at 'Lys-48' and 'Lys-63', while AXIN1 is only ubiquitinated at 'Lys-48'. May regulate TNKS and TNKS2 subcellular location, preventing aggregation at a centrosomal location. Neuroprotective protein. Protects the brain against N-methyl-D-aspartate (NMDA) receptor-mediated glutamate excitotoxicity and ischemia, by interfering with PAR-induced cell death, called parthanatos. Prevents nuclear translocation of AIFM1 in a PAR-binding dependent manner. Does not affect PARP1 activation. Protects against cell death induced by DNA damaging agents, such as N-methyl-N-nitro-N-nitrosoguanidine (MNNG) and rescues cells from G1 arrest. Promotes cell survival after gamma-irradiation. Facilitates DNA repair. In Mus musculus (Mouse), this protein is E3 ubiquitin-protein ligase RNF146 (Rnf146).